Consider the following 124-residue polypeptide: Small ribosomal subunit protein uS12c (124 aa).

This sequence belongs to the universal ribosomal protein uS12 family. Part of the 30S ribosomal subunit.

Its subcellular location is the plastid. With S4 and S5 plays an important role in translational accuracy. Located at the interface of the 30S and 50S subunits. The chain is Small ribosomal subunit protein uS12c (rps12) from Helicosporidium sp. subsp. Simulium jonesii (Green alga).